Here is a 283-residue protein sequence, read N- to C-terminus: MRQYLDLCQRIVDQGVWVENERTGKRCLTVINADLTYDVGNNQFPLVTTRKSFWKAAVAELLGYIRGYDNAADFRQLGTKTWDANANLNQAWLNNPYRKGEDDMGRVYGVQGRAWAKPDGGHIDQLKKIVDDLSRGVDDRGEILNFYNPGEFHMGCLRPCMYSHHFSLLGDTLYLNSTQRSCDVPLGLNFNMVQVYVFLALMAQITGKKPGLAYHKIVNAHIYQDQLELMRDVQLKREPFPAPQFHINPKIKTLQDLETWVTLDDFDVTGYQFHDPIQYPFSV.

Residue R22 participates in dUMP binding. C160 serves as the catalytic Nucleophile. Residues 180–183, N191, and 221–223 each bind dUMP; these read RSCD and HIY. D183 contacts (6R)-5,10-methylene-5,6,7,8-tetrahydrofolate. Residue S282 participates in (6R)-5,10-methylene-5,6,7,8-tetrahydrofolate binding.

The protein belongs to the thymidylate synthase family. Bacterial-type ThyA subfamily. Homodimer.

It is found in the cytoplasm. It carries out the reaction dUMP + (6R)-5,10-methylene-5,6,7,8-tetrahydrofolate = 7,8-dihydrofolate + dTMP. Its pathway is pyrimidine metabolism; dTTP biosynthesis. Catalyzes the reductive methylation of 2'-deoxyuridine-5'-monophosphate (dUMP) to 2'-deoxythymidine-5'-monophosphate (dTMP) while utilizing 5,10-methylenetetrahydrofolate (mTHF) as the methyl donor and reductant in the reaction, yielding dihydrofolate (DHF) as a by-product. This enzymatic reaction provides an intracellular de novo source of dTMP, an essential precursor for DNA biosynthesis. This Vibrio cholerae serotype O1 (strain ATCC 39315 / El Tor Inaba N16961) protein is Thymidylate synthase.